Here is a 358-residue protein sequence, read N- to C-terminus: Mannonate dehydratase (358 aa).

The protein belongs to the mannonate dehydratase family. Fe(2+) serves as cofactor. Mn(2+) is required as a cofactor.

It catalyses the reaction D-mannonate = 2-dehydro-3-deoxy-D-gluconate + H2O. It participates in carbohydrate metabolism; pentose and glucuronate interconversion. Functionally, catalyzes the dehydration of D-mannonate. This Shouchella clausii (strain KSM-K16) (Alkalihalobacillus clausii) protein is Mannonate dehydratase.